The sequence spans 228 residues: PKHD-type hydroxylase Rmet_0838 (228 aa).

Positions 78–179 (RVLPPMFNRY…RWASFFWAQS (102 aa)) constitute a Fe2OG dioxygenase domain. 3 residues coordinate Fe cation: His96, Asp98, and His160. Arg170 serves as a coordination point for 2-oxoglutarate.

Requires Fe(2+) as cofactor. L-ascorbate is required as a cofactor.

The polypeptide is PKHD-type hydroxylase Rmet_0838 (Cupriavidus metallidurans (strain ATCC 43123 / DSM 2839 / NBRC 102507 / CH34) (Ralstonia metallidurans)).